Here is a 158-residue protein sequence, read N- to C-terminus: Transcription elongation factor GreA (158 aa).

Residues 3 to 75 (TEKTYPMTQE…TQLENMIRNA (73 aa)) adopt a coiled-coil conformation.

It belongs to the GreA/GreB family.

In terms of biological role, necessary for efficient RNA polymerase transcription elongation past template-encoded arresting sites. The arresting sites in DNA have the property of trapping a certain fraction of elongating RNA polymerases that pass through, resulting in locked ternary complexes. Cleavage of the nascent transcript by cleavage factors such as GreA or GreB allows the resumption of elongation from the new 3'terminus. GreA releases sequences of 2 to 3 nucleotides. The chain is Transcription elongation factor GreA from Bacillus cereus (strain ATCC 14579 / DSM 31 / CCUG 7414 / JCM 2152 / NBRC 15305 / NCIMB 9373 / NCTC 2599 / NRRL B-3711).